A 594-amino-acid polypeptide reads, in one-letter code: UvrABC system protein C (594 aa).

The GIY-YIG domain occupies 14–91 (DQPGCYLMKD…IKKHDPKYNI (78 aa)). In terms of domain architecture, UVR spans 196–231 (KEVRSELETKMYEASEKLEFERAKELRDQIAHIDAI).

The protein belongs to the UvrC family. In terms of assembly, interacts with UvrB in an incision complex.

It is found in the cytoplasm. The UvrABC repair system catalyzes the recognition and processing of DNA lesions. UvrC both incises the 5' and 3' sides of the lesion. The N-terminal half is responsible for the 3' incision and the C-terminal half is responsible for the 5' incision. The protein is UvrABC system protein C of Bacillus cereus (strain AH187).